The primary structure comprises 732 residues: Ubiquitin carboxyl-terminal hydrolase 21 (732 aa).

Residues 1 to 10 (MAEFSDPPPS) are compositionally biased toward pro residues. Residues 1–111 (MAEFSDPPPS…ISPVSNNNHL (111 aa)) form a disordered region. 2 stretches are compositionally biased toward polar residues: residues 11–31 (NLSSSHKLTKPNQTLDESSPT) and 38–53 (VTNSLSLSSPIRQIQA). Residues 55-69 (SPAKPDGSSSSPPDK) show a composition bias toward low complexity. The region spanning 163–469 (AGLYNSGNTC…PAYILFYARE (307 aa)) is the USP domain. The active-site Nucleophile is cysteine 172. Histidine 428 acts as the Proton acceptor in catalysis. The disordered stretch occupies residues 534 to 732 (KEEVFHSAES…SSNMRRSIKL (199 aa)). Positions 540-551 (SAESSNNEDSSA) are enriched in low complexity. The span at 583 to 609 (AYIDKSEKPFAETSQPKEPKPFADRAS) shows a compositional bias: basic and acidic residues. Residues 719-732 (KKKKSSNMRRSIKL) show a composition bias toward basic residues.

This sequence belongs to the peptidase C19 family.

It carries out the reaction Thiol-dependent hydrolysis of ester, thioester, amide, peptide and isopeptide bonds formed by the C-terminal Gly of ubiquitin (a 76-residue protein attached to proteins as an intracellular targeting signal).. In terms of biological role, recognizes and hydrolyzes the peptide bond at the C-terminal Gly of ubiquitin. Involved in the processing of poly-ubiquitin precursors as well as that of ubiquitinated proteins. The sequence is that of Ubiquitin carboxyl-terminal hydrolase 21 (UBP21) from Arabidopsis thaliana (Mouse-ear cress).